The sequence spans 209 residues: Ribosomal RNA large subunit methyltransferase E (209 aa).

S-adenosyl-L-methionine is bound by residues Gly-63, Trp-65, Asp-83, Asp-99, and Asp-124. Lys-164 (proton acceptor) is an active-site residue.

This sequence belongs to the class I-like SAM-binding methyltransferase superfamily. RNA methyltransferase RlmE family.

It is found in the cytoplasm. It carries out the reaction uridine(2552) in 23S rRNA + S-adenosyl-L-methionine = 2'-O-methyluridine(2552) in 23S rRNA + S-adenosyl-L-homocysteine + H(+). Its function is as follows. Specifically methylates the uridine in position 2552 of 23S rRNA at the 2'-O position of the ribose in the fully assembled 50S ribosomal subunit. The polypeptide is Ribosomal RNA large subunit methyltransferase E (Aliivibrio fischeri (strain ATCC 700601 / ES114) (Vibrio fischeri)).